The primary structure comprises 1059 residues: MKEVTGSYNPRELEAGVQDTWKRENTYARVQEVRKDGKAFFFVDGPPYTTGHIHLGTAWNKIIKDTILRYHRMGGRNIIERAGYDMHGLPIEVKVEHQLGFTSKKDIEDYGIAAFIEQCRTFAVTHMEIMSEQFRQLGIWLDFDDPYQTIKAEYIESAWWAVQRAEERGLLERGHRVVNWCPRCETAIADSEVEYWDETDPSIFVKFPVTGRENEYLVIWTTTPWTLPANVAVAVSPAFTYARVAAKKDGSEEILWIADELVESVLKMGRYQDYTVLERVNGSDLVGTEYESPLAGQVPHQAEIRHRVVAADYVALENTGLVHIAPGHGWDDYLIGIQEGLEAFCPVDAGGCFTREAGAFADMYVRDANDLVIDALGDYLLARRTITHRYGHCWRCKTSIIYRATAQWFLKATEIREPMLQEIAKVKWYPEWAGSARFHDFVRDSRDWCISRQRYWGIPIPIWQCEQCGERTVIGTIAELEERSGARVPDPHRPYVDEVVIPCSCGGEMHRVADIFDVWFDSAVASWATLGFPREREAFDRLWPADFITEGQDQTRGWFYSQLGASTVAFGRAPYKSVLMHGFALDADGRKMSKSFGNVVTPEEVMNQFGVDVLRFYVLWANAPWDDLKFNWDSVKTIHRTLNILWNVYRFPLPYMVLDSFEPAAGDGGLWDGSFVRGNINDMPEEDRWIISRVNSLARTTAGDMQEYHLHRVTRALAAFILEDLSRWYVQLVRPRMWLEEDSPEKRYAYETVYYVMRRLVALLAPFTPHIAEEIYGNLRLAGDPESVHMLDWPEADDLLIAPDLESAMEVVRSFDDAVATARQNGRRKLRWPVAETVVVTGSDGVKTALEDLNDLALNRANSRTVRVVTGRWDRILWQAEPVMRAIGPEFGKEGPKVKALIEGADGTALKAAIERDGKAELGGYEIAERHVTFAEALPEGVFAAPMKDATVYVDVTLTPALEAEGYAREVIRRIQEMRRQLDLNVDDFIVAAVDVADDRVASLIAEEEWQKEIAGEVRAAALTVRRTDGERPTETFALEKDWDVEGVQMQIGISRAGE.

Positions Pro-47 to Thr-57 match the 'HIGH' region motif. A 'KMSKS' region motif is present at residues Lys-591–Ser-595. Lys-594 contributes to the ATP binding site.

The protein belongs to the class-I aminoacyl-tRNA synthetase family. IleS type 2 subfamily. As to quaternary structure, monomer. Zn(2+) is required as a cofactor.

Its subcellular location is the cytoplasm. The catalysed reaction is tRNA(Ile) + L-isoleucine + ATP = L-isoleucyl-tRNA(Ile) + AMP + diphosphate. In terms of biological role, catalyzes the attachment of isoleucine to tRNA(Ile). As IleRS can inadvertently accommodate and process structurally similar amino acids such as valine, to avoid such errors it has two additional distinct tRNA(Ile)-dependent editing activities. One activity is designated as 'pretransfer' editing and involves the hydrolysis of activated Val-AMP. The other activity is designated 'posttransfer' editing and involves deacylation of mischarged Val-tRNA(Ile). In Methanoculleus marisnigri (strain ATCC 35101 / DSM 1498 / JR1), this protein is Isoleucine--tRNA ligase.